Consider the following 676-residue polypeptide: Beta-taxilin (676 aa).

2 disordered regions span residues 1–55 (MEND…DISE) and 71–131 (AASL…EQKL). Polar residues-rich tracts occupy residues 8–25 (EKQQ…QGQS) and 34–45 (QPLSPTNQTSAQ). The segment covering 75-92 (VEKEGTTAETDKPEKEDV) has biased composition (basic and acidic residues). A compositionally biased stretch (acidic residues) spans 93 to 105 (GSMEDAECEDVNE). The segment covering 106-131 (ESEKDKPAPGDASRAKEPSASKEQKL) has biased composition (basic and acidic residues). The stretch at 157–461 (EEKLDLLFKK…LYRKIKQAQL (305 aa)) forms a coiled coil. Positions 464 to 486 (EVNGNDILEEDDDANTNPSSSEQ) are disordered.

The protein belongs to the taxilin family. As to expression, specifically expressed in skeletal and cardiac muscle.

It localises to the cytoplasm. Functionally, promotes neurite-outgrowth. May be involved in intracellular vesicle traffic. In Gallus gallus (Chicken), this protein is Beta-taxilin (TXLNB).